The primary structure comprises 728 residues: E3 ubiquitin-protein ligase TRIM36 (728 aa).

Residues 33 to 84 (CPACKELFTHPLILPCQHSICHKCVKELLLTLDDSFNDVGSDNSNQSSPRLR) form an RING-type; degenerate zinc finger. 2 consecutive B box-type zinc fingers follow at residues 154-192 (AIMCDLCKPPPQESTKSCMDCSASYCNECFKIHHPWGTI) and 207-249 (PKIL…VTTM). Zn(2+)-binding residues include cysteine 212, histidine 215, cysteine 235, and histidine 241. Residues 271–345 (ESQVKSQISE…MEEYQGLLEN (75 aa)) are a coiled coil. Positions 356-413 (LKETDQSCFVQTAKQLHLRIQKATESLKSFRPAAQTSFEDYVVNTSKQTELLGELSFF) constitute a COS domain. A Fibronectin type-III domain is found at 419 to 510 (VPEINEEQSK…RELILHTPPA (92 aa)). Residues 508–720 (PPAPVFSFLF…IQLEEPITAK (213 aa)) form the B30.2/SPRY domain.

This sequence belongs to the TRIM/RBCC family. In terms of assembly, interacts with CENPH. Highly expressed in testis, prostate and brain. Weakly expressed in kidney, lung and heart. Expressed in fetal tissues.

The protein localises to the cytoplasm. Its subcellular location is the cytoplasmic vesicle. The protein resides in the secretory vesicle. It is found in the acrosome. It localises to the cytoskeleton. It carries out the reaction S-ubiquitinyl-[E2 ubiquitin-conjugating enzyme]-L-cysteine + [acceptor protein]-L-lysine = [E2 ubiquitin-conjugating enzyme]-L-cysteine + N(6)-ubiquitinyl-[acceptor protein]-L-lysine.. Functionally, E3 ubiquitin-protein ligase which mediates ubiquitination and subsequent proteasomal degradation of target proteins. Involved in chromosome segregation and cell cycle regulation. May play a role in the acrosome reaction and fertilization. This chain is E3 ubiquitin-protein ligase TRIM36 (TRIM36), found in Homo sapiens (Human).